The primary structure comprises 140 residues: Organic hydroperoxide resistance protein-like (140 aa).

Belongs to the OsmC/Ohr family.

The sequence is that of Organic hydroperoxide resistance protein-like from Mycoplasma pneumoniae (strain ATCC 29342 / M129 / Subtype 1) (Mycoplasmoides pneumoniae).